Reading from the N-terminus, the 81-residue chain is uncharacterized protein (81 aa).

This is an uncharacterized protein from Schizosaccharomyces pombe (strain 972 / ATCC 24843) (Fission yeast).